Consider the following 363-residue polypeptide: Methylthioribose-1-phosphate isomerase (363 aa).

The Proton donor role is filled by Asp-253.

It belongs to the eIF-2B alpha/beta/delta subunits family. MtnA subfamily.

The protein resides in the cytoplasm. The protein localises to the nucleus. It catalyses the reaction 5-(methylsulfanyl)-alpha-D-ribose 1-phosphate = 5-(methylsulfanyl)-D-ribulose 1-phosphate. Its pathway is amino-acid biosynthesis; L-methionine biosynthesis via salvage pathway; L-methionine from S-methyl-5-thio-alpha-D-ribose 1-phosphate: step 1/6. Catalyzes the interconversion of methylthioribose-1-phosphate (MTR-1-P) into methylthioribulose-1-phosphate (MTRu-1-P). The polypeptide is Methylthioribose-1-phosphate isomerase (Drosophila grimshawi (Hawaiian fruit fly)).